Here is a 243-residue protein sequence, read N- to C-terminus: 1-(5-phosphoribosyl)-5-[(5-phosphoribosylamino)methylideneamino] imidazole-4-carboxamide isomerase (243 aa).

Asp-8 acts as the Proton acceptor in catalysis. The active-site Proton donor is Asp-129.

It belongs to the HisA/HisF family.

The protein resides in the cytoplasm. It catalyses the reaction 1-(5-phospho-beta-D-ribosyl)-5-[(5-phospho-beta-D-ribosylamino)methylideneamino]imidazole-4-carboxamide = 5-[(5-phospho-1-deoxy-D-ribulos-1-ylimino)methylamino]-1-(5-phospho-beta-D-ribosyl)imidazole-4-carboxamide. It participates in amino-acid biosynthesis; L-histidine biosynthesis; L-histidine from 5-phospho-alpha-D-ribose 1-diphosphate: step 4/9. The protein is 1-(5-phosphoribosyl)-5-[(5-phosphoribosylamino)methylideneamino] imidazole-4-carboxamide isomerase of Parvibaculum lavamentivorans (strain DS-1 / DSM 13023 / NCIMB 13966).